Here is a 256-residue protein sequence, read N- to C-terminus: Floral homeotic protein APETALA 1 (256 aa).

Residues 1–61 (MGRGRVQLKR…GKLFEYSTDS (61 aa)) enclose the MADS-box domain. In terms of domain architecture, K-box spans 88-178 (NTNWSMEYNR…SKQIKEREKI (91 aa)). Positions 88–185 (NTNWSMEYNR…EKILRAQQEQ (98 aa)) form a coiled coil.

In terms of assembly, homodimer capable of binding to CArG-box sequences. Heterodimer with SEP3, AP1 and SVP. Binds AP3/PI to form a ternary complex. Interacts with the SEU-LUG corepressor complex when complexed to AGL24 or SVP. Interacts with AGL15 and AGL16. Interacts with TT16/AGL32. Expressed in young flower primordia, later becomes localized to sepals and petals.

The protein resides in the nucleus. Transcription factor that promotes early floral meristem identity in synergy with LEAFY. Is required subsequently for the transition of an inflorescence meristem into a floral meristem. Is indispensable for normal development of sepals and petals in flowers. Positively regulates the B class homeotic proteins APETALA3 and PISTILLATA with the cooperation of LEAFY and UFO. Interacts with SEPALLATA3 or AP3/PI heterodimer to form complexes that could be involved in genes regulation during floral meristem development. Positively regulates AGAMOUS in cooperation with LEAFY. Displays a redundant function with CAULIFLOWER in the up-regulation of LEAFY. Together with AGL24 and SVP, controls the identity of the floral meristem and regulates expression of class B, C and E genes. Represses flowering time genes AGL24, SVP and SOC1 in emerging floral meristems. The sequence is that of Floral homeotic protein APETALA 1 (AP1) from Arabidopsis thaliana (Mouse-ear cress).